Consider the following 306-residue polypeptide: Homoserine O-acetyltransferase (306 aa).

Residue Cys-142 is the Acyl-thioester intermediate of the active site. Substrate contacts are provided by Lys-163 and Ser-194. His-237 acts as the Proton acceptor in catalysis. Glu-239 is a catalytic residue. Arg-251 serves as a coordination point for substrate.

Belongs to the MetA family.

The protein resides in the cytoplasm. It carries out the reaction L-homoserine + acetyl-CoA = O-acetyl-L-homoserine + CoA. The protein operates within amino-acid biosynthesis; L-methionine biosynthesis via de novo pathway; O-acetyl-L-homoserine from L-homoserine: step 1/1. Functionally, transfers an acetyl group from acetyl-CoA to L-homoserine, forming acetyl-L-homoserine. The protein is Homoserine O-acetyltransferase of Clostridium tetani (strain Massachusetts / E88).